Consider the following 183-residue polypeptide: Small ribosomal subunit protein uS4c (183 aa).

The region spanning 82 to 143 (MRLDNILFRL…KQRSKALIQN (62 aa)) is the S4 RNA-binding domain.

Belongs to the universal ribosomal protein uS4 family. In terms of assembly, part of the 30S ribosomal subunit. Contacts protein S5. The interaction surface between S4 and S5 is involved in control of translational fidelity.

The protein localises to the plastid. It localises to the chloroplast. Functionally, one of the primary rRNA binding proteins, it binds directly to 16S rRNA where it nucleates assembly of the body of the 30S subunit. Its function is as follows. With S5 and S12 plays an important role in translational accuracy. The protein is Small ribosomal subunit protein uS4c (rps4) of Schizorhiza neglecta (Lapeirousia neglecta).